A 380-amino-acid chain; its full sequence is Queuine tRNA-ribosyltransferase (380 aa).

Catalysis depends on Asp96, which acts as the Proton acceptor. Substrate contacts are provided by residues 96–100, Asp150, Gln193, and Gly220; that span reads DSGGF. The segment at 251–257 is RNA binding; sequence GVGAPDS. The active-site Nucleophile is Asp270. The tract at residues 275–279 is RNA binding; important for wobble base 34 recognition; that stretch reads TRIAR. Cys308, Cys310, Cys313, and His339 together coordinate Zn(2+).

Belongs to the queuine tRNA-ribosyltransferase family. As to quaternary structure, homodimer. Within each dimer, one monomer is responsible for RNA recognition and catalysis, while the other monomer binds to the replacement base PreQ1. Zn(2+) is required as a cofactor.

The catalysed reaction is 7-aminomethyl-7-carbaguanine + guanosine(34) in tRNA = 7-aminomethyl-7-carbaguanosine(34) in tRNA + guanine. It functions in the pathway tRNA modification; tRNA-queuosine biosynthesis. Functionally, catalyzes the base-exchange of a guanine (G) residue with the queuine precursor 7-aminomethyl-7-deazaguanine (PreQ1) at position 34 (anticodon wobble position) in tRNAs with GU(N) anticodons (tRNA-Asp, -Asn, -His and -Tyr). Catalysis occurs through a double-displacement mechanism. The nucleophile active site attacks the C1' of nucleotide 34 to detach the guanine base from the RNA, forming a covalent enzyme-RNA intermediate. The proton acceptor active site deprotonates the incoming PreQ1, allowing a nucleophilic attack on the C1' of the ribose to form the product. After dissociation, two additional enzymatic reactions on the tRNA convert PreQ1 to queuine (Q), resulting in the hypermodified nucleoside queuosine (7-(((4,5-cis-dihydroxy-2-cyclopenten-1-yl)amino)methyl)-7-deazaguanosine). The protein is Queuine tRNA-ribosyltransferase of Streptococcus pneumoniae (strain ATCC BAA-255 / R6).